Consider the following 672-residue polypeptide: Transketolase (672 aa).

His35 lines the substrate pocket. Residues His75 and 124–126 (GPL) each bind thiamine diphosphate. Residue Asp162 coordinates Mg(2+). Thiamine diphosphate-binding residues include Gly163 and Asn192. Positions 192 and 194 each coordinate Mg(2+). His266, Arg361, and Ser388 together coordinate substrate. His266 serves as a coordination point for thiamine diphosphate. Residue Glu415 is the Proton donor of the active site. Phe441 provides a ligand contact to thiamine diphosphate. The substrate site is built by His465, Asp473, and Arg524.

Belongs to the transketolase family. Homodimer. The cofactor is Mg(2+). Requires Ca(2+) as cofactor. It depends on Mn(2+) as a cofactor. Co(2+) serves as cofactor. Thiamine diphosphate is required as a cofactor.

The enzyme catalyses D-sedoheptulose 7-phosphate + D-glyceraldehyde 3-phosphate = aldehydo-D-ribose 5-phosphate + D-xylulose 5-phosphate. It functions in the pathway carbohydrate biosynthesis; Calvin cycle. Its pathway is carbohydrate degradation; pentose phosphate pathway. Catalyzes the transfer of a two-carbon ketol group from a ketose donor to an aldose acceptor, via a covalent intermediate with the cofactor thiamine pyrophosphate. The chain is Transketolase (tktA) from Rhodobacter capsulatus (strain ATCC BAA-309 / NBRC 16581 / SB1003).